The primary structure comprises 187 residues: Elongation factor P (187 aa).

The protein belongs to the elongation factor P family.

It is found in the cytoplasm. The protein operates within protein biosynthesis; polypeptide chain elongation. Its function is as follows. Involved in peptide bond synthesis. Stimulates efficient translation and peptide-bond synthesis on native or reconstituted 70S ribosomes in vitro. Probably functions indirectly by altering the affinity of the ribosome for aminoacyl-tRNA, thus increasing their reactivity as acceptors for peptidyl transferase. This chain is Elongation factor P, found in Rhodococcus jostii (strain RHA1).